Here is a 128-residue protein sequence, read N- to C-terminus: Sulfurtransferase TusD (128 aa).

Cys78 serves as the catalytic Cysteine persulfide intermediate.

This sequence belongs to the DsrE/TusD family. As to quaternary structure, heterohexamer, formed by a dimer of trimers. The hexameric TusBCD complex contains 2 copies each of TusB, TusC and TusD. The TusBCD complex interacts with TusE.

The protein localises to the cytoplasm. Functionally, part of a sulfur-relay system required for 2-thiolation of 5-methylaminomethyl-2-thiouridine (mnm(5)s(2)U) at tRNA wobble positions. Accepts sulfur from TusA and transfers it in turn to TusE. The chain is Sulfurtransferase TusD from Escherichia coli O17:K52:H18 (strain UMN026 / ExPEC).